The chain runs to 81 residues: Arminin 2a (81 aa).

Residues 1-18 (MKTVFAILFLAFIALTYA) form the signal peptide. Residues 19–57 (RSYEDVKEEIKNEVVKEILEDLEEESDELDDKSKEINDA) constitute a propeptide that is removed on maturation. Position 78 is an alanine amide (Ala-78).

Belongs to the arminin family. As to expression, expressed in entodermal epithelium along the body column.

Its subcellular location is the secreted. It is found in the target cell membrane. In terms of biological role, antimicrobial peptide with a broad-spectrum antimicrobial activity. Keeps its antibacterial activity under a wide range of salt concentrations that mimic physiological conditions of human blood, which is surprising, since Hydra is an obligate freshwater animal with nearly no salt tolerance. Does not affect red blood cells. The polypeptide is Arminin 2a (Hydra vulgaris (Hydra)).